The following is a 652-amino-acid chain: p-hydroxybenzoic acid efflux pump subunit AaeB (652 aa).

Transmembrane regions (helical) follow at residues 8–28, 34–54, 64–84, 88–108, 118–138, 149–169, 367–387, 404–424, 429–449, 453–473, and 480–500; these read FPIK…HFNL, AVMT…GDPF, LRII…IATI, ALMM…SSLI, LAGY…SVLL, EIII…PRSV, LFWL…LAVI, FLYG…VIMP, SMLL…ILIQ, IGTL…NPMT, and LDNA…ILLI.

The protein belongs to the aromatic acid exporter ArAE (TC 2.A.85) family.

Its subcellular location is the cell inner membrane. Functionally, forms an efflux pump with AaeA. Could function as a metabolic relief valve, allowing to eliminate certain compounds when they accumulate to high levels in the cell. The sequence is that of p-hydroxybenzoic acid efflux pump subunit AaeB from Erwinia billingiae (strain Eb661).